The chain runs to 309 residues: ADP-L-glycero-D-manno-heptose-6-epimerase (309 aa).

Residues 10–11, 31–32, lysine 38, lysine 53, 75–79, and asparagine 92 contribute to the NADP(+) site; these read FI, DN, and EGACS. Tyrosine 140 (proton acceptor) is an active-site residue. Residue lysine 144 participates in NADP(+) binding. Asparagine 169 lines the substrate pocket. The NADP(+) site is built by valine 170 and lysine 178. Lysine 178 functions as the Proton acceptor in the catalytic mechanism. Substrate is bound by residues serine 180, histidine 187, 201–204, arginine 209, and tyrosine 272; that span reads FEGS.

The protein belongs to the NAD(P)-dependent epimerase/dehydratase family. HldD subfamily. In terms of assembly, homopentamer. It depends on NADP(+) as a cofactor.

It catalyses the reaction ADP-D-glycero-beta-D-manno-heptose = ADP-L-glycero-beta-D-manno-heptose. Its pathway is nucleotide-sugar biosynthesis; ADP-L-glycero-beta-D-manno-heptose biosynthesis; ADP-L-glycero-beta-D-manno-heptose from D-glycero-beta-D-manno-heptose 7-phosphate: step 4/4. Functionally, catalyzes the interconversion between ADP-D-glycero-beta-D-manno-heptose and ADP-L-glycero-beta-D-manno-heptose via an epimerization at carbon 6 of the heptose. The sequence is that of ADP-L-glycero-D-manno-heptose-6-epimerase from Enterobacter sp. (strain 638).